Here is a 442-residue protein sequence, read N- to C-terminus: Cyclic AMP receptor-like protein B (442 aa).

The Extracellular portion of the chain corresponds to 1-16 (MGGDIHLCSMILGKNH). The chain crosses the membrane as a helical span at residues 17 to 37 (LIFLYFANLFGSTLSFLATII). Residues 38–219 (TIVFYLVKKY…PKKIDTLIFY (182 aa)) lie on the Cytoplasmic side of the membrane. Residues 83–166 (YSSTPISIQN…LSSSDKNNTI (84 aa)) form a disordered region. The span at 91 to 103 (QNNNNKNNNLPKQ) shows a compositional bias: low complexity. The span at 112–122 (INKNHNNYCNY) shows a compositional bias: polar residues. The span at 123 to 144 (STSATSSSSSSSSFSSTNSGSS) shows a compositional bias: low complexity. The span at 145-166 (YEYQQPQKNQQTLSSSDKNNTI) shows a compositional bias: polar residues. Residues 220 to 240 (LSISDFIAVSGIIIEQLIIIF) form a helical membrane-spanning segment. The Extracellular portion of the chain corresponds to 241–255 (NKEISKSIGFCIGER). The chain crosses the membrane as a helical span at residues 256–276 (VSIHFGLLATLFWSNCIAYYL). Over 277–289 (LRETYELKPYNIR) the chain is Cytoplasmic. The chain crosses the membrane as a helical span at residues 290–310 (FVYFHIVCWGMALIGVASLFF). The Extracellular portion of the chain corresponds to 311 to 334 (SKIITVSNIDQGGSWCSVSSSYQL). The chain crosses the membrane as a helical span at residues 335–355 (YFWVIPLFVSFTWNLICYCLI). Over 356-382 (YRKFNKIIGIYGIQSVQIKTIIIRKLS) the chain is Cytoplasmic. Residues 383 to 403 (FYLLAFLITWVWDVINNSIFL) traverse the membrane as a helical segment. Over 404–410 (YEGKCPP) the chain is Extracellular. A helical transmembrane segment spans residues 411-431 (FALWILQEFFSSGYGFFNSLA). Over 432–442 (YAVTTRFYSRK) the chain is Cytoplasmic.

The protein belongs to the G-protein coupled receptor 5 family.

The protein localises to the membrane. Its function is as follows. Receptor for cAMP. This chain is Cyclic AMP receptor-like protein B (crlB), found in Dictyostelium discoideum (Social amoeba).